The primary structure comprises 318 residues: tRNA U34 carboxymethyltransferase (318 aa).

7 residues coordinate carboxy-S-adenosyl-L-methionine: Lys-88, Trp-102, Lys-107, Gly-126, Met-192, Tyr-196, and Arg-311.

Belongs to the class I-like SAM-binding methyltransferase superfamily. CmoB family. In terms of assembly, homotetramer.

It carries out the reaction carboxy-S-adenosyl-L-methionine + 5-hydroxyuridine(34) in tRNA = 5-carboxymethoxyuridine(34) in tRNA + S-adenosyl-L-homocysteine + H(+). Functionally, catalyzes carboxymethyl transfer from carboxy-S-adenosyl-L-methionine (Cx-SAM) to 5-hydroxyuridine (ho5U) to form 5-carboxymethoxyuridine (cmo5U) at position 34 in tRNAs. The polypeptide is tRNA U34 carboxymethyltransferase (Pseudomonas fluorescens (strain SBW25)).